We begin with the raw amino-acid sequence, 256 residues long: Ribosomal RNA small subunit methyltransferase A (256 aa).

Asparagine 12, leucine 14, glycine 39, glutamate 60, aspartate 85, and asparagine 103 together coordinate S-adenosyl-L-methionine.

The protein belongs to the class I-like SAM-binding methyltransferase superfamily. rRNA adenine N(6)-methyltransferase family. RsmA subfamily.

It localises to the cytoplasm. The enzyme catalyses adenosine(1518)/adenosine(1519) in 16S rRNA + 4 S-adenosyl-L-methionine = N(6)-dimethyladenosine(1518)/N(6)-dimethyladenosine(1519) in 16S rRNA + 4 S-adenosyl-L-homocysteine + 4 H(+). Specifically dimethylates two adjacent adenosines (A1518 and A1519) in the loop of a conserved hairpin near the 3'-end of 16S rRNA in the 30S particle. May play a critical role in biogenesis of 30S subunits. The chain is Ribosomal RNA small subunit methyltransferase A from Legionella pneumophila (strain Corby).